Reading from the N-terminus, the 361-residue chain is MEKKILEYLKRLEEVEVKISDPEIFNNPKEYSSLSREHARLTELKNVYDKVLRHEKILNDDKHALAQEKDPEMIAMLEEGIQSGKSEIEKLYKILENLLVPPDPDDDLNVIMELRAGTGGDEAALFVGDCVRMYHLYASAKGWKYEELSASESDIGGYKEYVMGISGTGVKRLLQYEAGTHRVQRVPETETQGRVHTSAITVAVLPEPAEDDEEVFVDEKDLKIDTFRASGAGGQHVNVTDSAVRITHLPTGVVVTCQDERSQHKNKAKAMRILKARIRDAEMQRRHKEASAMRSAQVGSGDRSERIRTYNFSQNRVTDHRIGLTLYNLDKVMEGDLDTITSALVSHAYHQLFQNGNEENS.

Residue Q235 is modified to N5-methylglutamine.

Belongs to the prokaryotic/mitochondrial release factor family. In terms of processing, methylated by PrmC. Methylation increases the termination efficiency of RF1.

The protein resides in the cytoplasm. Functionally, peptide chain release factor 1 directs the termination of translation in response to the peptide chain termination codons UAG and UAA. The sequence is that of Peptide chain release factor 1 from Chlamydia felis (strain Fe/C-56) (Chlamydophila felis).